Here is a 70-residue protein sequence, read N- to C-terminus: Sec-independent protein translocase protein TatA (70 aa).

Residues 1–21 (MFGLGGQELLLILLIILLLFG) form a helical membrane-spanning segment. Residues 47 to 70 (EDEFNKAMSDPPEKKEKESPSDKG) form a disordered region. A compositionally biased stretch (basic and acidic residues) spans 57 to 70 (PPEKKEKESPSDKG).

The protein belongs to the TatA/E family. Forms a complex with TatC.

It is found in the cell inner membrane. Functionally, part of the twin-arginine translocation (Tat) system that transports large folded proteins containing a characteristic twin-arginine motif in their signal peptide across membranes. TatA could form the protein-conducting channel of the Tat system. In Prosthecochloris aestuarii (strain DSM 271 / SK 413), this protein is Sec-independent protein translocase protein TatA.